We begin with the raw amino-acid sequence, 224 residues long: Lipoprotein-releasing system ATP-binding protein LolD (224 aa).

One can recognise an ABC transporter domain in the interval 5-224 (LRAENIKKVI…GKVVGEITRV (220 aa)). Residue 37–44 (GASGSGKS) participates in ATP binding.

The protein belongs to the ABC transporter superfamily. Lipoprotein translocase (TC 3.A.1.125) family. The complex is composed of two ATP-binding proteins (LolD) and two transmembrane proteins (LolC and LolE).

Its subcellular location is the cell inner membrane. Functionally, part of the ABC transporter complex LolCDE involved in the translocation of mature outer membrane-directed lipoproteins, from the inner membrane to the periplasmic chaperone, LolA. Responsible for the formation of the LolA-lipoprotein complex in an ATP-dependent manner. This Aquifex aeolicus (strain VF5) protein is Lipoprotein-releasing system ATP-binding protein LolD.